The chain runs to 139 residues: Phosphoribosyl-AMP cyclohydrolase (139 aa).

Mg(2+) is bound at residue aspartate 92. Residue cysteine 93 coordinates Zn(2+). Aspartate 94 and aspartate 96 together coordinate Mg(2+). Residues cysteine 111 and cysteine 118 each coordinate Zn(2+).

It belongs to the PRA-CH family. Homodimer. Mg(2+) is required as a cofactor. Requires Zn(2+) as cofactor.

It is found in the cytoplasm. The catalysed reaction is 1-(5-phospho-beta-D-ribosyl)-5'-AMP + H2O = 1-(5-phospho-beta-D-ribosyl)-5-[(5-phospho-beta-D-ribosylamino)methylideneamino]imidazole-4-carboxamide. It functions in the pathway amino-acid biosynthesis; L-histidine biosynthesis; L-histidine from 5-phospho-alpha-D-ribose 1-diphosphate: step 3/9. In terms of biological role, catalyzes the hydrolysis of the adenine ring of phosphoribosyl-AMP. The polypeptide is Phosphoribosyl-AMP cyclohydrolase (Caulobacter vibrioides (strain ATCC 19089 / CIP 103742 / CB 15) (Caulobacter crescentus)).